The sequence spans 647 residues: Macrolide export ATP-binding/permease protein MacB (647 aa).

The region spanning 6–244 (LEISGCYRTF…VDTAVTKINN (239 aa)) is the ABC transporter domain. ATP is bound at residue 42–49 (GASGSGKS). Transmembrane regions (helical) follow at residues 273 to 293 (FLTM…VALG), 522 to 542 (LLIS…VMNI), 577 to 597 (LVCL…GVVF), and 612 to 632 (SIVA…FLPA).

It belongs to the ABC transporter superfamily. Macrolide exporter (TC 3.A.1.122) family. As to quaternary structure, homodimer. Part of the tripartite efflux system MacAB-TolC, which is composed of an inner membrane transporter, MacB, a periplasmic membrane fusion protein, MacA, and an outer membrane component, TolC. The complex forms a large protein conduit and can translocate molecules across both the inner and outer membranes. Interacts with MacA.

The protein resides in the cell inner membrane. Part of the tripartite efflux system MacAB-TolC. MacB is a non-canonical ABC transporter that contains transmembrane domains (TMD), which form a pore in the inner membrane, and an ATP-binding domain (NBD), which is responsible for energy generation. Confers resistance against macrolides. The chain is Macrolide export ATP-binding/permease protein MacB from Shewanella sp. (strain W3-18-1).